Reading from the N-terminus, the 555-residue chain is Suppressor of tumorigenicity 7 protein-like (555 aa).

A run of 4 helical transmembrane segments spans residues 32–52, 76–96, 504–524, and 531–551; these read APWARGLLAVAAGLGLFYAAL, FYFALTVTSSFISGLIFVFEW, LPFFIHFTAGLCSFSAMLALL, and LMVVFAKAVLRVLWPVSAPSV.

Belongs to the ST7 family.

It localises to the membrane. This chain is Suppressor of tumorigenicity 7 protein-like (ST7L), found in Gallus gallus (Chicken).